We begin with the raw amino-acid sequence, 102 residues long: NADH-quinone oxidoreductase subunit K (102 aa).

3 consecutive transmembrane segments (helical) span residues 6-26 (MHHGLLLAAILFALGMIGILV), 30-50 (LIFILMSIEIMLNAAGLAFVV), and 64-84 (FIFILSVAAAEVSVGLALLLL).

This sequence belongs to the complex I subunit 4L family. In terms of assembly, NDH-1 is composed of 14 different subunits. Subunits NuoA, H, J, K, L, M, N constitute the membrane sector of the complex.

It localises to the cell inner membrane. The enzyme catalyses a quinone + NADH + 5 H(+)(in) = a quinol + NAD(+) + 4 H(+)(out). Its function is as follows. NDH-1 shuttles electrons from NADH, via FMN and iron-sulfur (Fe-S) centers, to quinones in the respiratory chain. The immediate electron acceptor for the enzyme in this species is believed to be ubiquinone. Couples the redox reaction to proton translocation (for every two electrons transferred, four hydrogen ions are translocated across the cytoplasmic membrane), and thus conserves the redox energy in a proton gradient. This is NADH-quinone oxidoreductase subunit K from Nitrosospira multiformis (strain ATCC 25196 / NCIMB 11849 / C 71).